Consider the following 466-residue polypeptide: Exodeoxyribonuclease 7 large subunit (466 aa).

This sequence belongs to the XseA family. As to quaternary structure, heterooligomer composed of large and small subunits.

Its subcellular location is the cytoplasm. The enzyme catalyses Exonucleolytic cleavage in either 5'- to 3'- or 3'- to 5'-direction to yield nucleoside 5'-phosphates.. Functionally, bidirectionally degrades single-stranded DNA into large acid-insoluble oligonucleotides, which are then degraded further into small acid-soluble oligonucleotides. The polypeptide is Exodeoxyribonuclease 7 large subunit (Ruthia magnifica subsp. Calyptogena magnifica).